Reading from the N-terminus, the 141-residue chain is Probable mitochondrial pyruvate carrier 1 (141 aa).

2 helical membrane passes run 31 to 52 (YLCS…AAIL) and 60 to 82 (LISG…YAWM).

The protein belongs to the mitochondrial pyruvate carrier (MPC) (TC 2.A.105) family. In terms of assembly, the functional 150 kDa pyruvate import complex is a heteromer of mpc1 and mpc2.

The protein resides in the mitochondrion. Its subcellular location is the mitochondrion inner membrane. Its function is as follows. Mediates the uptake of pyruvate into mitochondria. This Schizosaccharomyces pombe (strain 972 / ATCC 24843) (Fission yeast) protein is Probable mitochondrial pyruvate carrier 1.